Consider the following 385-residue polypeptide: D-alanyl-D-alanine-carboxypeptidase/endopeptidase AmpH (385 aa).

The N-terminal stretch at 1-21 (MKRSLLFSAVLCAASLTSVHA) is a signal peptide.

This sequence belongs to the beta-lactamase family.

Its subcellular location is the cell inner membrane. Its activity is regulated as follows. Inhibited by cefmetazole. In terms of biological role, hydrolyzes the cross-linked dimers tetrapentapeptide (D45) and tetratetrapeptide (D44). Removes the terminal D-alanine from muropeptides and disaccharide pentapeptide M5 with a C-terminal D-Ala-D-Ala dipeptide. Associated with recycling and remodeling of peptidoglycan (PG). The polypeptide is D-alanyl-D-alanine-carboxypeptidase/endopeptidase AmpH (ampH) (Escherichia coli O157:H7).